A 667-amino-acid chain; its full sequence is Small ribosomal subunit protein mS39 (667 aa).

A mitochondrion-targeting transit peptide spans Met1–His11. A disordered region spans residues Glu199–Asp226. PPR repeat units follow at residues Asn249 to Ala283, Asp284 to Pro323, Asn324 to Pro360, Ser361 to Pro400, Ser482 to Asn516, and Thr565 to Pro599.

The protein belongs to the mitochondrion-specific ribosomal protein mS39 family.

It localises to the mitochondrion. Mitochondrial RNA-binding protein that may have a role in mitochondrial translation. This chain is Small ribosomal subunit protein mS39 (ptcd3), found in Danio rerio (Zebrafish).